Consider the following 310-residue polypeptide: Atrochrysone carboxyl ACP thioesterase CPUR_05436 (310 aa).

Positions 105, 107, 109, and 110 each coordinate Zn(2+). Aspartate 109 serves as the catalytic Proton donor/acceptor.

Belongs to the metallo-beta-lactamase superfamily. It depends on Zn(2+) as a cofactor.

It catalyses the reaction atrochrysone carboxyl-[ACP] + H2O = atrochrysone carboxylate + holo-[ACP] + H(+). Its pathway is pigment biosynthesis. Its function is as follows. Atrochrysone carboxyl ACP thioesterase; part of the ergochrome gene cluster responsible for the typical purple-black color of the ergot sclerotia. The ergochrome gene cluster produces several ergot pigments including the yellow ergochrome secalonic acid and its derivatives, as well as the red anthraquinones endocrocin and clavorubin. The pathway begins with the synthesis of atrochrysone thioester by the polyketide synthase (PKS) CPUR_05437. The atrochrysone carboxyl ACP thioesterase CPUR_05436 then breaks the thioester bond and releases the atrochrysone carboxylic acid from CPUR_05437. The atrochrysone carboxylic acid is then converted to atrochrysone which is further transformed into emodin anthrone. The next step is performed by the anthrone oxygenase CPUR_05434 that catalyzes the oxidation of emodinanthrone to emodin. Emodin is further modified to yield monodictyphenone via several steps involving CPUR_05427, CPUR_05428, CPUR_05429 and CPUR_05430. The short chain dehydrogenase/reductase CPUR_05418 then catalyzes the C-5 ketoreduction to give the xanthone skeleton of the monomeric units. Ergochromes formation requires further dimerization steps of different xanthone units, probably catalyzed by the cytochrome P450 monooxygenase CPUR_05419. CPUR_05425, CPUR_05426 and CPUR_05431 are unique to Claviceps, thus it is likely that they are involved in further modification of xanthone units or in their dimerization. The yellow ergochromes and the red anthraquinone pigments endocrocin and clavorubin are products from the same PKS derived precursors and the latter are likely shunt products in the pathway of xanthone biosynthesis. It is proposed that atrochrysone carboxylic acid released from the PKS CPUR_05437 can also be converted to endocrocin anthrone which is further oxidized into endocrocin by CPUR_05435. Endocrocin could be then modified to clavorubin, possibly by CPUR_05423 and CPUR_05431. Clavorubin is the principal anthraquinone metabolite produced by the cluster with a much higher yield compared to endocrocin. This Claviceps purpurea (strain 20.1) (Ergot fungus) protein is Atrochrysone carboxyl ACP thioesterase CPUR_05436.